Consider the following 141-residue polypeptide: LOB domain-containing protein 34 (141 aa).

Residues Asn-16–Ile-119 enclose the LOB domain.

The protein belongs to the LOB domain-containing protein family.

The sequence is that of LOB domain-containing protein 34 (LBD34) from Arabidopsis thaliana (Mouse-ear cress).